Here is a 167-residue protein sequence, read N- to C-terminus: Urease accessory protein UreE (167 aa).

The interval 137-167 is disordered; that stretch reads ARGAYHAHGGHSHGHDHGHSHGHDHHDHSHD. The segment covering 149–167 has biased composition (basic and acidic residues); the sequence is HGHDHGHSHGHDHHDHSHD.

Belongs to the UreE family.

The protein localises to the cytoplasm. In terms of biological role, involved in urease metallocenter assembly. Binds nickel. Probably functions as a nickel donor during metallocenter assembly. The polypeptide is Urease accessory protein UreE (Rhizobium rhizogenes (strain K84 / ATCC BAA-868) (Agrobacterium radiobacter)).